Here is a 267-residue protein sequence, read N- to C-terminus: Small ribosomal subunit protein uS5 (267 aa).

Positions 1-37 are disordered; it reads MADEAPARSGFRGGFGSRGGRGGRGRGRGRWARGRGK. Residues 11–20 are compositionally biased toward gly residues; the sequence is FRGGFGSRGG. Residues 21 to 34 show a composition bias toward basic residues; the sequence is RGGRGRGRGRWARG. Ser-60 is subject to Phosphoserine. Positions 85 to 148 constitute an S5 DRBM domain; that stretch reads LKDEVLKIMP…ILAKLSVVPV (64 aa).

The protein belongs to the universal ribosomal protein uS5 family.

In terms of biological role, component of the ribosome, a large ribonucleoprotein complex responsible for the synthesis of proteins in the cell. The small ribosomal subunit (SSU) binds messenger RNAs (mRNAs) and translates the encoded message by selecting cognate aminoacyl-transfer RNA (tRNA) molecules. The large subunit (LSU) contains the ribosomal catalytic site termed the peptidyl transferase center (PTC), which catalyzes the formation of peptide bonds, thereby polymerizing the amino acids delivered by tRNAs into a polypeptide chain. The nascent polypeptides leave the ribosome through a tunnel in the LSU and interact with protein factors that function in enzymatic processing, targeting, and the membrane insertion of nascent chains at the exit of the ribosomal tunnel. Plays a role in the assembly and function of the 40S ribosomal subunit. Mutations in this protein affects the control of translational fidelity. Involved in nucleolar processing of pre-18S ribosomal RNA and ribosome assembly. Has a specific developmental role during oogenesis. In Drosophila melanogaster (Fruit fly), this protein is Small ribosomal subunit protein uS5 (RpS2).